The sequence spans 799 residues: Armadillo repeat-containing protein wrm-1 (799 aa).

Positions 1–10 (MEERGPDIEK) are enriched in basic and acidic residues. The interval 1–60 (MEERGPDIEKYGSQPCTPLSFDPMLPSTSRVATPVRPSSTLSARQAPASPFRAQPQNMEP) is disordered. Residues 26–43 (PSTSRVATPVRPSSTLSA) are compositionally biased toward polar residues. One copy of the ARM repeat lies at 454 to 496 (ESIRRVIQVVGSDDATIAERATGVLRNIGQPNKQNKVIMVRNG).

As to quaternary structure, interacts (independently of ARM repeat) with nhr-25. Component of the beta-catenin-lit-1 complex (also called the lit-1/wrm-1 complex or the wrm-1/lit-1 kinase complex) at least composed of lit-1 and wrm-1. Interacts (via N-terminus) with lit-1; the interaction is direct and activates lit-1 kinase activity which leads to the phosphorylation of pop-1. This promotes pop-1 interaction with par-5 and translocation of pop-1 from the nucleus to the cytoplasm.

The protein localises to the cytoplasm. It localises to the cell cortex. Its subcellular location is the nucleus. Functionally, antagonistic role in the Wnt signaling pathway that operates in embryogenesis. When located at the cortex it has been shown to inhibit Wnt signaling during asymmetric cell division but when relocated to the nucleus it shows positive regulation. Has a role in blastomere signaling during endoderm specification. Component of the beta-catenin-lit-1 complex which promotes phosphorylation, down-regulation and subcellular relocation of pop-1. Within the complex, activates lit-1-dependent kinase activity. Can substitute for bar-1 indicating functional redundancy. Appears to have a role in centrosome positioning. Involved in the development of distal tip cells (DTC) by regulating the asymmetric distribution of cye-1 and cki-1 between the daughters of Z1.a and Z4.p cells. This Caenorhabditis briggsae protein is Armadillo repeat-containing protein wrm-1.